The chain runs to 96 residues: Co-chaperonin GroES (96 aa).

The protein belongs to the GroES chaperonin family. Heptamer of 7 subunits arranged in a ring. Interacts with the chaperonin GroEL.

It is found in the cytoplasm. In terms of biological role, together with the chaperonin GroEL, plays an essential role in assisting protein folding. The GroEL-GroES system forms a nano-cage that allows encapsulation of the non-native substrate proteins and provides a physical environment optimized to promote and accelerate protein folding. GroES binds to the apical surface of the GroEL ring, thereby capping the opening of the GroEL channel. The sequence is that of Co-chaperonin GroES from Alcanivorax borkumensis (strain ATCC 700651 / DSM 11573 / NCIMB 13689 / SK2).